The chain runs to 186 residues: Large ribosomal subunit protein uL22 (186 aa).

Ser-158 is subject to Phosphoserine. Residues 159-186 (KATDDEPAKKKLSKKKLQRQKEKMLRSE) are disordered. Thr-161 bears the Phosphothreonine mark. Residues 177 to 186 (RQKEKMLRSE) are compositionally biased toward basic and acidic residues.

It belongs to the universal ribosomal protein uL22 family.

This chain is Large ribosomal subunit protein uL22 (RpL17), found in Drosophila melanogaster (Fruit fly).